Consider the following 321-residue polypeptide: Transmembrane and ubiquitin-like domain-containing protein 2 (321 aa).

A helical membrane pass occupies residues 36–56 (VMVVAGVVVLILALVLAWLST). Disordered stretches follow at residues 87–131 (LVAG…GGVE) and 145–170 (KRQA…LPPS). Residues 104-120 (EGNDEKAEEAGEGRGDS) are compositionally biased toward basic and acidic residues. The Ubiquitin-like domain maps to 174–247 (ITVRLKFLND…IHCHRSPPGS (74 aa)). A run of 2 helical transmembrane segments spans residues 266–286 (LGVN…GVVW) and 295–315 (FFTA…SFLV).

The protein resides in the membrane. The protein is Transmembrane and ubiquitin-like domain-containing protein 2 (TMUB2) of Homo sapiens (Human).